We begin with the raw amino-acid sequence, 271 residues long: Putative pirin-like protein At3g59260 (271 aa).

The protein belongs to the pirin family.

It is found in the nucleus. The sequence is that of Putative pirin-like protein At3g59260 from Arabidopsis thaliana (Mouse-ear cress).